The sequence spans 353 residues: Fe(3+) ions import ATP-binding protein FbpC (353 aa).

Residues 9 to 239 (VTFQNVRKSF…PASSFIADFM (231 aa)) form the ABC transporter domain. 41–48 (GPSGCGKT) is a binding site for ATP.

Belongs to the ABC transporter superfamily. Fe(3+) ion importer (TC 3.A.1.10) family. The complex is composed of two ATP-binding proteins (FbpC), two transmembrane proteins (FbpB) and a solute-binding protein (FbpA).

It is found in the cell inner membrane. The enzyme catalyses Fe(3+)(out) + ATP + H2O = Fe(3+)(in) + ADP + phosphate + H(+). Functionally, part of the ABC transporter complex FbpABC involved in Fe(3+) ions import. Responsible for energy coupling to the transport system. The polypeptide is Fe(3+) ions import ATP-binding protein FbpC (Rhizobium etli (strain ATCC 51251 / DSM 11541 / JCM 21823 / NBRC 15573 / CFN 42)).